Here is a 46-residue protein sequence, read N- to C-terminus: Diuretic hormone (46 aa).

Position 46 is an isoleucine amide (Ile-46).

Belongs to the sauvagine/corticotropin-releasing factor/urotensin I family.

Its subcellular location is the secreted. Regulation of fluid secretion. Stimulates primary urine secretion by Malpighian tubules and causes a dose-dependent stimulation of cAMP levels in the tubules. The sequence is that of Diuretic hormone from Locusta migratoria (Migratory locust).